We begin with the raw amino-acid sequence, 633 residues long: Pescadillo homolog (633 aa).

A BRCT domain is found at 321–414 (RLRTLFKGLK…QLLPTNKYFL (94 aa)). Disordered regions lie at residues 450–470 (HAQS…DTVE) and 490–567 (KKYG…LQAR). Phosphoserine occurs at positions 453 and 457. Acidic residues-rich tracts occupy residues 454 to 470 (EDES…DTVE) and 498 to 526 (VNED…EELD). Positions 527 to 538 (EKEKRLLEEKQK) are enriched in basic and acidic residues. Basic residues predominate over residues 545-554 (KVHKVNKRQV). Positions 555-564 (HKAEVDEHRL) are enriched in basic and acidic residues. A coiled-coil region spans residues 593–626 (LLRKKRRTIETDAKEAKKLAKREARKAAAAAAAA).

The protein belongs to the pescadillo family.

Its subcellular location is the nucleus. The protein localises to the nucleolus. It localises to the nucleoplasm. In terms of biological role, required for maturation of ribosomal RNAs and formation of the large ribosomal subunit. The sequence is that of Pescadillo homolog from Drosophila virilis (Fruit fly).